The primary structure comprises 456 residues: PTS system sucrose-specific EIIBC component (456 aa).

A PTS EIIB type-1 domain is found at 4-87 (EQISRSLLPL…IQAAGISESS (84 aa)). The active-site Phosphocysteine intermediate; for EIIB activity is the cysteine 26. The region spanning 107–456 (RLLSNIFVPI…LTLKYKTDAE (350 aa)) is the PTS EIIC type-1 domain. 10 helical membrane-spanning segments follow: residues 112 to 132 (IFVPIIPAIVASGLLMGLLGM), 144 to 164 (ALYIMLDMCSSAAFIILPILI), 181 to 201 (TLGGILTHPALTNAWGVAAGF), 209 to 229 (IEVAMIGYQGTVFPVLLAVWF), 247 to 267 (LILTPFLTVIISGFIALLLIG), 288 to 308 (AGWLAGLLFGGLYSVIVITGI), 329 to 349 (FLLPIWAMANVAQGGACFAVW), 360 to 380 (ITLPSAFSAMLGITEAAIFGI), 388 to 408 (FIAALVGGAAGGAWVVSMHVY), and 428 to 448 (LLNYIIGMAIAFAVAFALSLT).

The protein localises to the cell inner membrane. The enzyme catalyses N(pros)-phospho-L-histidyl-[protein](out) + sucrose = sucrose 6(G)-phosphate(in) + L-histidyl-[protein]. The phosphoenolpyruvate-dependent sugar phosphotransferase system (sugar PTS), a major carbohydrate active transport system, catalyzes the phosphorylation of incoming sugar substrates concomitantly with their translocation across the cell membrane. This system is involved in sucrose transport. The sequence is that of PTS system sucrose-specific EIIBC component from Klebsiella pneumoniae.